We begin with the raw amino-acid sequence, 72 residues long: Small ribosomal subunit protein bS20 (72 aa).

Belongs to the bacterial ribosomal protein bS20 family.

Binds directly to 16S ribosomal RNA. The protein is Small ribosomal subunit protein bS20 (rpsT) of Aeromonas hydrophila.